A 353-amino-acid polypeptide reads, in one-letter code: Ferredoxin--NADP reductase 1 (353 aa).

The FAD site is built by Thr-14, Asp-33, Gln-41, Tyr-46, Ala-86, Phe-121, Asp-289, and Thr-330.

This sequence belongs to the ferredoxin--NADP reductase type 2 family. As to quaternary structure, homodimer. Requires FAD as cofactor.

It carries out the reaction 2 reduced [2Fe-2S]-[ferredoxin] + NADP(+) + H(+) = 2 oxidized [2Fe-2S]-[ferredoxin] + NADPH. This is Ferredoxin--NADP reductase 1 from Christiangramia forsetii (strain DSM 17595 / CGMCC 1.15422 / KT0803) (Gramella forsetii).